Consider the following 218-residue polypeptide: MEFQKIHFQKAHFLISAPDIRHLDKHLPPESGIEIAFAGRSNAGKSSALNRLTRQKGLARTSKTPGRTQLINVFEIEEGKRLIDLPGYGFAKVPLAMKLKWQKSLGEYLQERESLKGLVVLMDIRQPFKELDQQLIYWAIDADIPVLALLTKADKLKQGARKTTLLKMREEAKNFEGDVQVELFSSLKGIGLEMLEQKVTSWYAQGETPSTALDEISI.

The region spanning 31-205 (SGIEIAFAGR…EQKVTSWYAQ (175 aa)) is the EngB-type G domain. GTP contacts are provided by residues 39–46 (GRSNAGKS), 66–70 (GRTQL), 84–87 (DLPG), 151–154 (TKAD), and 184–186 (FSS). 2 residues coordinate Mg(2+): serine 46 and threonine 68.

The protein belongs to the TRAFAC class TrmE-Era-EngA-EngB-Septin-like GTPase superfamily. EngB GTPase family. Mg(2+) serves as cofactor.

Necessary for normal cell division and for the maintenance of normal septation. This chain is Probable GTP-binding protein EngB, found in Psychromonas ingrahamii (strain DSM 17664 / CCUG 51855 / 37).